Reading from the N-terminus, the 320-residue chain is Probable L,D-transpeptidase YcfS (320 aa).

The N-terminal stretch at 1–23 is a signal peptide; sequence MMIKTRFSRWLTFFTFAAAVALA. The 46-residue stretch at 45 to 90 folds into the LysM domain; it reads KFHVVENDGGSLEAIAKKYNVGFLALLQANPGVDPYVPRAGSVLTI. The L,D-TPase catalytic domain occupies 102–241; that stretch reads EGIVINIAEL…VTPGTKVNII (140 aa). The active-site Proton donor/acceptor is the histidine 201. The active-site Nucleophile is the cysteine 217.

Belongs to the YkuD family. As to quaternary structure, interacts with DsbG.

It localises to the periplasm. It functions in the pathway cell wall biogenesis; peptidoglycan biosynthesis. Responsible, at least in part, for anchoring of the major outer membrane lipoprotein (Lpp, also known as the Braun lipoprotein) to the peptidoglycan via a meso-diaminopimelyl-L-Lys- bond on the terminal residue of Lpp. The chain is Probable L,D-transpeptidase YcfS (ycfS) from Escherichia coli (strain K12).